The sequence spans 237 residues: Orotidine 5'-phosphate decarboxylase (237 aa).

Substrate is bound by residues Asp-17, Lys-39, 66–75 (DLKLHDIGNT), Thr-121, Arg-182, Gln-191, Gly-211, and Arg-212. Catalysis depends on Lys-68, which acts as the Proton donor.

This sequence belongs to the OMP decarboxylase family. Type 1 subfamily. Homodimer.

The catalysed reaction is orotidine 5'-phosphate + H(+) = UMP + CO2. The protein operates within pyrimidine metabolism; UMP biosynthesis via de novo pathway; UMP from orotate: step 2/2. Functionally, catalyzes the decarboxylation of orotidine 5'-monophosphate (OMP) to uridine 5'-monophosphate (UMP). The sequence is that of Orotidine 5'-phosphate decarboxylase from Rhodopseudomonas palustris (strain ATCC BAA-98 / CGA009).